The chain runs to 141 residues: Hemoglobin subunit alpha (141 aa).

Residues 1–141 form the Globin domain; sequence VLSPDDKKHV…VSTVLTSKYR (141 aa). At S3 the chain carries Phosphoserine. N6-succinyllysine is present on residues K7 and K11. K16 is subject to N6-acetyllysine; alternate. K16 is subject to N6-succinyllysine; alternate. Phosphotyrosine is present on Y24. Residue S35 is modified to Phosphoserine. The residue at position 40 (K40) is an N6-succinyllysine. The residue at position 49 (S49) is a Phosphoserine. H58 provides a ligand contact to O2. H87 lines the heme b pocket. Phosphoserine is present on S102. T108 bears the Phosphothreonine mark. Phosphoserine is present on residues S124 and S131. T134 and T137 each carry phosphothreonine. S138 carries the phosphoserine modification.

It belongs to the globin family. As to quaternary structure, heterotetramer of two alpha chains and two beta chains. In terms of tissue distribution, red blood cells.

Functionally, involved in oxygen transport from the lung to the various peripheral tissues. In terms of biological role, hemopressin acts as an antagonist peptide of the cannabinoid receptor CNR1. Hemopressin-binding efficiently blocks cannabinoid receptor CNR1 and subsequent signaling. This is Hemoglobin subunit alpha (HBA) from Cercocebus atys (Sooty mangabey).